The chain runs to 467 residues: Glutamate--tRNA ligase (467 aa).

The short motif at 13-23 (PSPTGYLHVGG) is the 'HIGH' region element. The 'KMSKS' region signature appears at 245–249 (KLSKR). Residue Lys-248 participates in ATP binding.

Belongs to the class-I aminoacyl-tRNA synthetase family. Glutamate--tRNA ligase type 1 subfamily. Monomer.

It localises to the cytoplasm. The catalysed reaction is tRNA(Glu) + L-glutamate + ATP = L-glutamyl-tRNA(Glu) + AMP + diphosphate. Functionally, catalyzes the attachment of glutamate to tRNA(Glu) in a two-step reaction: glutamate is first activated by ATP to form Glu-AMP and then transferred to the acceptor end of tRNA(Glu). This chain is Glutamate--tRNA ligase, found in Herminiimonas arsenicoxydans.